The primary structure comprises 317 residues: Mitochondrial thiamine pyrophosphate carrier 1 (317 aa).

The next 6 helical transmembrane spans lie at 15-37, 80-100, 118-138, 168-190, 205-227, and 281-300; these read TVSWYNSVIAGSVSGVFARMATA, IPATAMYVVYGAVQFGSYSWF, LTVGALAGMTSSVVSYPLDLL, GFFTGISTAMTTVTLSTAIMFLT, FWSRPVSASSGIIAGFVSKTMVF, and GLTMGLCKSVPTTAISLFVY. 3 Solcar repeats span residues 16 to 103, 112 to 197, and 206 to 306; these read VSWY…FNNV, SQQG…VNIV, and WSRP…TMDL.

The protein belongs to the mitochondrial carrier (TC 2.A.29) family.

It localises to the mitochondrion inner membrane. In terms of biological role, mitochondrial transporter that mediates uptake of thiamine pyrophosphate (ThPP) into mitochondria. The protein is Mitochondrial thiamine pyrophosphate carrier 1 (TPC1) of Kluyveromyces lactis (strain ATCC 8585 / CBS 2359 / DSM 70799 / NBRC 1267 / NRRL Y-1140 / WM37) (Yeast).